The following is a 370-amino-acid chain: Chloromuconate cycloisomerase (370 aa).

The active-site Proton acceptor is the Lys165. Residues Asp194, Glu220, and Asp245 each contribute to the Mn(2+) site. Glu323 (proton donor) is an active-site residue.

Belongs to the mandelate racemase/muconate lactonizing enzyme family. Requires Mn(2+) as cofactor.

It catalyses the reaction 2-[(2R)-2-chloro-2,5-dihydro-5-oxofuryl]acetate = 3-chloro-cis,cis-muconate + H(+). The protein operates within aromatic compound metabolism; 3-chlorocatechol degradation. The protein is Chloromuconate cycloisomerase (tfdD) of Delftia acidovorans (Pseudomonas acidovorans).